A 133-amino-acid polypeptide reads, in one-letter code: Ribonuclease VapC10 (133 aa).

The PINc domain maps to 2–119 (ILVDSDVLIA…NVWHFPMFEQ (118 aa)). Positions 5 and 92 each coordinate Mg(2+).

The protein belongs to the PINc/VapC protein family. It depends on Mg(2+) as a cofactor.

Its function is as follows. Toxic component of a type II toxin-antitoxin (TA) system. An RNase. The cognate antitoxin is VapB10. This Mycobacterium tuberculosis (strain CDC 1551 / Oshkosh) protein is Ribonuclease VapC10.